The following is a 246-amino-acid chain: tRNA (guanine-N(7)-)-methyltransferase (246 aa).

The segment at 1-26 (MIENPSPSAANLPEHPSTDASHPRNI) is disordered. 4 residues coordinate S-adenosyl-L-methionine: E75, E100, D127, and D150. D150 is a catalytic residue. K154 provides a ligand contact to substrate. Residues 156–161 (KHNKRR) form an interaction with RNA region. Residues D186 and 225–228 (TKFE) contribute to the substrate site.

It belongs to the class I-like SAM-binding methyltransferase superfamily. TrmB family.

The enzyme catalyses guanosine(46) in tRNA + S-adenosyl-L-methionine = N(7)-methylguanosine(46) in tRNA + S-adenosyl-L-homocysteine. It participates in tRNA modification; N(7)-methylguanine-tRNA biosynthesis. Catalyzes the formation of N(7)-methylguanine at position 46 (m7G46) in tRNA. The chain is tRNA (guanine-N(7)-)-methyltransferase from Polaromonas sp. (strain JS666 / ATCC BAA-500).